The chain runs to 478 residues: Dynein regulatory complex subunit 4 (478 aa).

Residues 1 to 12 (MAPKRRGKKGKA) show a composition bias toward basic residues. Positions 1–32 (MAPKRRGKKGKAKGNAVVDGVAPEDMSKEQVE) are disordered. The segment at 1–114 (MAPKRRGKKG…LLYEHQNNLA (114 aa)) is regulates microtubule-binding. Coiled-coil stretches lie at residues 24-201 (EDMS…DELD) and 243-427 (NNLA…LARV). The microtubule-binding stretch occupies residues 115 to 258 (EVKTEGTVVM…NSLKEQMEDM (144 aa)). Residues 357–478 (QQKTGFKNLV…GPAGLVGAPT (122 aa)) form an interaction with SMO region.

It belongs to the DRC4 family. As to quaternary structure, component of the nexin-dynein regulatory complex (N-DRC). Interacts with microtubules. Interacts with SMO. Interacts (via coiled-coil domains) with RAB3B (in GTP-bound form). Interacts with DRC1. Interacts with DRC7.

It localises to the cytoplasm. The protein resides in the cytoskeleton. Its subcellular location is the cell projection. The protein localises to the cilium. It is found in the flagellum. It localises to the cilium axoneme. The protein resides in the cilium basal body. Its subcellular location is the golgi apparatus. The protein localises to the flagellum axoneme. Its function is as follows. Component of the nexin-dynein regulatory complex (N-DRC), a key regulator of ciliary/flagellar motility which maintains the alignment and integrity of the distal axoneme and regulates microtubule sliding in motile axonemes. Plays an important role in the assembly of the N-DRC linker. Plays dual roles at both the primary (or non-motile) cilia to regulate hedgehog signaling and in motile cilia to coordinate cilia movement. Required for proper motile cilia functioning. Positively regulates ciliary smoothened (SMO)-dependent Hedgehog (Hh) signaling pathway by facilitating the trafficking of SMO into the cilium and the stimulation of SMO activity in a GRK2-dependent manner. This chain is Dynein regulatory complex subunit 4 (Gas8), found in Rattus norvegicus (Rat).